The primary structure comprises 328 residues: Apoptosis facilitator Bcl-2-like protein 14 (328 aa).

S44 carries the post-translational modification Phosphoserine. The BH3 motif lies at 213–227 (IVELLKFSGDQLGRE). The BH2 motif lies at 309–316 (WVQQNGGW).

The protein belongs to the Bcl-2 family. Phosphorylated by MELK, leading to inhibit its pro-apoptotic function.

Its subcellular location is the cytoplasm. Functionally, plays a role in apoptosis. This is Apoptosis facilitator Bcl-2-like protein 14 (Bcl2l14) from Mus musculus (Mouse).